The primary structure comprises 163 residues: Deoxyuridine 5'-triphosphate nucleotidohydrolase (163 aa).

Substrate contacts are provided by residues 78–80 (RSG), asparagine 91, and 95–97 (TVD). Over residues 140–151 (ERESLNETERGD) the composition is skewed to basic and acidic residues. A disordered region spans residues 140–163 (ERESLNETERGDGGFGHTGVNSQP).

This sequence belongs to the dUTPase family. Requires Mg(2+) as cofactor.

It carries out the reaction dUTP + H2O = dUMP + diphosphate + H(+). The protein operates within pyrimidine metabolism; dUMP biosynthesis; dUMP from dCTP (dUTP route): step 2/2. Its function is as follows. This enzyme is involved in nucleotide metabolism: it produces dUMP, the immediate precursor of thymidine nucleotides and it decreases the intracellular concentration of dUTP so that uracil cannot be incorporated into DNA. The chain is Deoxyuridine 5'-triphosphate nucleotidohydrolase from Heliobacterium modesticaldum (strain ATCC 51547 / Ice1).